Consider the following 691-residue polypeptide: DNA ligase (691 aa).

Residues Asp-41 to Asp-45, Ser-90 to Leu-91, and Glu-130 each bind NAD(+). The N6-AMP-lysine intermediate role is filled by Lys-132. NAD(+) contacts are provided by Arg-153, Glu-190, Lys-307, and Lys-331. Zn(2+)-binding residues include Cys-425, Cys-428, Cys-443, and Cys-449. The 82-residue stretch at Ala-610–Arg-691 folds into the BRCT domain.

The protein belongs to the NAD-dependent DNA ligase family. LigA subfamily. Mg(2+) serves as cofactor. The cofactor is Mn(2+).

The enzyme catalyses NAD(+) + (deoxyribonucleotide)n-3'-hydroxyl + 5'-phospho-(deoxyribonucleotide)m = (deoxyribonucleotide)n+m + AMP + beta-nicotinamide D-nucleotide.. DNA ligase that catalyzes the formation of phosphodiester linkages between 5'-phosphoryl and 3'-hydroxyl groups in double-stranded DNA using NAD as a coenzyme and as the energy source for the reaction. It is essential for DNA replication and repair of damaged DNA. In Burkholderia thailandensis (strain ATCC 700388 / DSM 13276 / CCUG 48851 / CIP 106301 / E264), this protein is DNA ligase.